The following is an 89-amino-acid chain: Phosphocarrier protein HPr (89 aa).

The region spanning 1-88 is the HPr domain; that stretch reads MLEHELIVTN…ELFENRFNED (88 aa). Catalysis depends on H15, which acts as the Pros-phosphohistidine intermediate. Phosphoserine; by HPrK/P is present on S46.

Belongs to the HPr family.

Its subcellular location is the cytoplasm. Its activity is regulated as follows. Phosphorylation on Ser-46 inhibits the phosphoryl transfer from enzyme I to HPr. Its function is as follows. General (non sugar-specific) component of the phosphoenolpyruvate-dependent sugar phosphotransferase system (sugar PTS). This major carbohydrate active-transport system catalyzes the phosphorylation of incoming sugar substrates concomitantly with their translocation across the cell membrane. The phosphoryl group from phosphoenolpyruvate (PEP) is transferred to the phosphoryl carrier protein HPr by enzyme I. Phospho-HPr then transfers it to the PTS EIIA domain. In Xylella fastidiosa (strain 9a5c), this protein is Phosphocarrier protein HPr (ptsH).